We begin with the raw amino-acid sequence, 144 residues long: UPF0299 membrane protein MS1271 (144 aa).

4 helical membrane-spanning segments follow: residues 5–25 (IFLF…GEGI), 28–48 (LIPI…IGLT), 57–77 (VFFG…PVSV), and 92–112 (SLLI…GFLG).

This sequence belongs to the UPF0299 family.

It localises to the cell inner membrane. The protein is UPF0299 membrane protein MS1271 of Mannheimia succiniciproducens (strain KCTC 0769BP / MBEL55E).